We begin with the raw amino-acid sequence, 475 residues long: Ribulose bisphosphate carboxylase large chain (475 aa).

Residues 1 to 2 constitute a propeptide that is removed on maturation; the sequence is MS. Pro-3 bears the N-acetylproline mark. Residue Lys-14 is modified to N6,N6,N6-trimethyllysine. The substrate site is built by Asn-123 and Thr-173. The active-site Proton acceptor is the Lys-175. Lys-177 contacts substrate. Residues Lys-201, Asp-203, and Glu-204 each contribute to the Mg(2+) site. At Lys-201 the chain carries N6-carboxylysine. Residue His-294 is the Proton acceptor of the active site. Arg-295, His-327, and Ser-379 together coordinate substrate.

The protein belongs to the RuBisCO large chain family. Type I subfamily. In terms of assembly, heterohexadecamer of 8 large chains and 8 small chains; disulfide-linked. The disulfide link is formed within the large subunit homodimers. It depends on Mg(2+) as a cofactor. Post-translationally, the disulfide bond which can form in the large chain dimeric partners within the hexadecamer appears to be associated with oxidative stress and protein turnover.

The protein localises to the plastid. It is found in the chloroplast. The enzyme catalyses 2 (2R)-3-phosphoglycerate + 2 H(+) = D-ribulose 1,5-bisphosphate + CO2 + H2O. It catalyses the reaction D-ribulose 1,5-bisphosphate + O2 = 2-phosphoglycolate + (2R)-3-phosphoglycerate + 2 H(+). Functionally, ruBisCO catalyzes two reactions: the carboxylation of D-ribulose 1,5-bisphosphate, the primary event in carbon dioxide fixation, as well as the oxidative fragmentation of the pentose substrate in the photorespiration process. Both reactions occur simultaneously and in competition at the same active site. The protein is Ribulose bisphosphate carboxylase large chain of Pinus krempfii (Krempf's pine).